The primary structure comprises 330 residues: Polygalacturonase inhibitor 1 (330 aa).

Positions 1–21 are cleaved as a signal peptide; sequence MDKTATLCLLFLFTFLTTCLS. 2 disulfides stabilise this stretch: Cys-25/Cys-55 and Cys-56/Cys-63. LRR repeat units lie at residues 69-93, 94-117, 118-142, 143-166, 167-189, 191-215, 217-237, 238-260, 261-285, and 287-309; these read NHRV…VGDL, PYLE…TIAK, LKNL…ISQL, KNLE…LSTL, PKIL…SFGS, PGTV…LGNI, FNRI…LFGS, NKTT…KVDI, PKTL…WTEA, and LQFF…KLQT. N-linked (GlcNAc...) asparagine glycans are attached at residues Asn-106 and Asn-130. A glycan (N-linked (GlcNAc...) asparagine) is linked at Asn-238. A glycan (N-linked (GlcNAc...) asparagine) is linked at Asn-291. 2 disulfide bridges follow: Cys-298–Cys-320 and Cys-322–Cys-329.

Belongs to the polygalacturonase-inhibiting protein family.

The protein localises to the secreted. It localises to the cell wall. The protein resides in the membrane. Its function is as follows. Inhibitor of fungal polygalacturonase. It is an important factor for plant resistance to phytopathogenic fungi. This Arabidopsis thaliana (Mouse-ear cress) protein is Polygalacturonase inhibitor 1 (PGIP1).